Here is a 388-residue protein sequence, read N- to C-terminus: Tryptophan synthase beta chain 1 (388 aa).

Lysine 82 carries the N6-(pyridoxal phosphate)lysine modification.

The protein belongs to the TrpB family. As to quaternary structure, tetramer of two alpha and two beta chains. The cofactor is pyridoxal 5'-phosphate.

It carries out the reaction (1S,2R)-1-C-(indol-3-yl)glycerol 3-phosphate + L-serine = D-glyceraldehyde 3-phosphate + L-tryptophan + H2O. Its pathway is amino-acid biosynthesis; L-tryptophan biosynthesis; L-tryptophan from chorismate: step 5/5. Functionally, the beta subunit is responsible for the synthesis of L-tryptophan from indole and L-serine. The sequence is that of Tryptophan synthase beta chain 1 (trpB1) from Pyrococcus abyssi (strain GE5 / Orsay).